A 104-amino-acid polypeptide reads, in one-letter code: MSPLKKTYVLKLYVAGNTPNSVRALKTLKEILEQEFQGVYALKVIDVLKNPQLAEEDKILATPTLSKILPPPVRKIIGDLSDREKVLIGLDLLYEELNEDEYNL.

This sequence belongs to the KaiB family. In terms of assembly, the KaiABC complex composition changes during the circadian cycle to control KaiC phosphorylation. Complexes KaiC(6), KaiA(2-4):KaiC(6), KaiB(6):KaiC(6) and KaiC(6):KaiB(6):KaiA(12) are among the most important forms, many form cooperatively. Undergoes a major conformational rearrangment; in the free state forms homotetramers as a dimer of dimers. When bound to the CI domain of KaiC switches to a monomeric thioredoxin-fold (KaiB(fs)). KaiB(fs) binds CikA, leading it to dephosphorylate phospho-RpaA.

Key component of the KaiABC oscillator complex, which constitutes the main circadian regulator in cyanobacteria. Complex composition changes during the circadian cycle to control KaiC phosphorylation. KaiA stimulates KaiC autophosphorylation, while KaiB sequesters KaiA, leading to KaiC autodephosphorylation. Phospho-Ser-431 KaiC accumulation triggers binding of KaiB to form the KaiB(6):KaiC(6) complex, leading to changes in output regulators CikA and SasA. KaiB switches to a thioredoxin-like fold (KaiB(fs)) when bound to KaiC. KaiB(6):KaiC(6) formation exposes a site for KaiA binding that sequesters KaiA from KaiC, making the KaiC(6):KaiB(6):KaiA(12) complex that results in KaiC autodephosphorylation. In terms of biological role, a metamorphic protein which reversibly switches between an inactive tetrameric fold and a rare, thioredoxin-like monomeric fold (KaiB(fs)). KaiB(fs) binds phospho-KaiC, KaiA and CikA. KaiA and CikA compete for binding to KaiB(fs), and KaiB(fs) and SasA compete for binding to KaiC, thus the clock oscillator and output signal pathway are tightly coupled. This is Circadian clock oscillator protein KaiB from Trichodesmium erythraeum (strain IMS101).